A 1076-amino-acid chain; its full sequence is Nucleoporin NUP1 (1076 aa).

Low complexity predominate over residues 1 to 11 (MSSNTSSVMSS). Residues 1 to 39 (MSSNTSSVMSSPRVEKRSFSSTLKSFFTNPNKKRPSSKK) are disordered. Position 2 is an N-acetylserine (Ser-2). A compositionally biased stretch (polar residues) spans 19 to 30 (FSSTLKSFFTNP). Ser-54 and Ser-161 each carry phosphoserine. 2 disordered regions span residues 143–183 (SQSK…TNVG) and 224–260 (KKDNKDKEGNAGGDQKTSENRNNIKSSISNGNLATGP). Composition is skewed to polar residues over residues 154-170 (LCTSSTPSPIKNGSCTR) and 243-260 (NRNNIKSSISNGNLATGP). The stretch at 336-338 (FDF) is one FXF 1 repeat. Position 381 is a phosphothreonine (Thr-381). Phosphoserine is present on Ser-383. The FXF 2 repeat unit spans residues 384 to 386 (FNF). Residues 403 to 518 (TTLFNFGGKS…SFVFGASDKQ (116 aa)) are disordered. FXFG repeat units lie at residues 406 to 409 (FNFG) and 422 to 425 (FKFG). Residues 426–439 (KTSEKSENHTESDA) show a composition bias toward basic and acidic residues. 2 FXFG repeats span residues 448 to 451 (FSFG) and 484 to 487 (FDFG). A compositionally biased stretch (basic and acidic residues) spans 488–505 (KTGDQKETKKGESEKDAS). FXFG repeat units follow at residues 510–513 (FVFG), 525–528 (FTFG), 543–546 (FTFG), and 571–574 (FTFG). The tract at residues 548-743 (AATAKETHTK…SMKSTASTAA (196 aa)) is disordered. FXF repeat units lie at residues 591 to 593 (FSF), 614 to 616 (FSF), 636 to 638 (FSF), and 657 to 659 (FTF). Composition is skewed to polar residues over residues 634 to 649 (PTFSFTEPAQKDSSVV) and 658 to 667 (TFASSKTSQP). Ser-637 carries the phosphoserine modification. The stretch at 671–674 (FSFG) is one FXFG 9 repeat. One copy of the FXF 7 repeat lies at 689 to 691 (FSF). 2 FXFG repeats span residues 708 to 711 (FTFG) and 727 to 730 (FSFG). The span at 708–723 (FTFGGSTTNNTTTTST) shows a compositional bias: low complexity. The FXF 8 repeat unit spans residues 753-755 (FSF). The FXFG 12 repeat unit spans residues 800–803 (FSFG). FXF repeat units follow at residues 819 to 821 (FSF) and 866 to 868 (FGF). The FXFG 13 repeat unit spans residues 885 to 888 (FNFG). Residues 929–931 (FNF) form an FXF 11 repeat. The disordered stretch occupies residues 940–979 (GGSVFNMNGNTNANTVFAGSNNQPHQSQTPSFNTNSSFTP). Polar residues predominate over residues 944 to 964 (FNMNGNTNANTVFAGSNNQPH). Positions 965-979 (QSQTPSFNTNSSFTP) are enriched in low complexity. FG repeat units follow at residues 1008–1009 (FG), 1027–1028 (FG), and 1038–1039 (FG). Positions 1025-1054 (SIFGGAGGVPTTSFGQPQSAPNQMGMGTNN) are disordered. Residues 1034 to 1045 (PTTSFGQPQSAP) are compositionally biased toward polar residues. The interval 1040-1076 (QPQSAPNQMGMGTNNGMSMGGGVMANRKIARMRHSKR) is interaction with KAP95.

Component of the nuclear pore complex (NPC). NPC constitutes the exclusive means of nucleocytoplasmic transport. NPCs allow the passive diffusion of ions and small molecules and the active, nuclear transport receptor-mediated bidirectional transport of macromolecules such as proteins, RNAs, ribonucleoparticles (RNPs), and ribosomal subunits across the nuclear envelope. Due to its 8-fold rotational symmetry, all subunits are present with 8 copies or multiples thereof. Interacts through its FG repeats with nuclear transport receptors. Binds to the nuclear basket of the NPC through NUP60. Interacts with KAP122. Phosphorylated by CDC28.

The protein resides in the nucleus. The protein localises to the nuclear pore complex. Its subcellular location is the nucleus membrane. Its function is as follows. Functions as a component of the nuclear pore complex (NPC). NPC components, collectively referred to as nucleoporins (NUPs), can play the role of both NPC structural components and of docking or interaction partners for transiently associated nuclear transport factors. Active directional transport is assured by both, a Phe-Gly (FG) repeat affinity gradient for these transport factors across the NPC and a transport cofactor concentration gradient across the nuclear envelope (GSP1 and GSP2 GTPases associated predominantly with GTP in the nucleus, with GDP in the cytoplasm). As one of the FG repeat nucleoporins NUP1 is involved in interactions with and guidance of nuclear transport receptors such as SRP1-KAP95 (importin alpha and beta) through the NPC. Like the closely related NUP2 it also plays an important role in disassembling and recycling SRP1-KAP95 to the cytoplasm after nuclear import. Upon entry of the heterotrimeric SRP1-KAP95-cargo complex in the nucleus, NUP1 binds through its C-terminus to KAP95, thus accelerating the release of KAP95 and, indirectly, of the nuclear localization signal (NLS)-containing cargo from the SRP1-KAP95-cargo complex. In Saccharomyces cerevisiae (strain ATCC 204508 / S288c) (Baker's yeast), this protein is Nucleoporin NUP1 (NUP1).